The primary structure comprises 259 residues: MFDIGVNLTSTQFAKDRDKVIKRAREAGVSGMLITGTNALESQQALSLARQHPDYCWSTAGVHPHHASEWSGETAATLRRLAESPQMVAIGECGLDFNRNFSDPEQQAYAFNAQLALAAELSLPVFLHCREAHERFISILKPWLPKLKAAVLHCFTGTRPELESCLAEGLFIGITGWICDERRGQELRELMPLIPADRLLLETDAPWLLPRDMRPRPPSRRNEPCFLPHIVQQVALLRGDDAGELAAQTALNARRLFNL.

E92, H128, and H153 together coordinate a divalent metal cation.

This sequence belongs to the metallo-dependent hydrolases superfamily. TatD-type hydrolase family. TatD subfamily. As to quaternary structure, monomer. Mg(2+) serves as cofactor.

It is found in the cytoplasm. Its function is as follows. 3'-5' exonuclease that prefers single-stranded DNA and RNA. May play a role in the H(2)O(2)-induced DNA damage repair. This Erwinia tasmaniensis (strain DSM 17950 / CFBP 7177 / CIP 109463 / NCPPB 4357 / Et1/99) protein is 3'-5' ssDNA/RNA exonuclease TatD.